Here is a 157-residue protein sequence, read N- to C-terminus: uncharacterized protein (157 aa).

It belongs to the mimivirus L242/L243 family.

This is an uncharacterized protein from Acanthamoeba polyphaga (Amoeba).